The primary structure comprises 1114 residues: Kinesin-like protein KIN-12B (1114 aa).

A disordered region spans residues 1–119; the sequence is MRSLFSSKLS…GGGGGDSGVQ (119 aa). The segment covering 98 to 107 has biased composition (low complexity); it reads SAASPAPEGA. The region spanning 117-459 is the Kinesin motor domain; that stretch reads GVQVVVRVRP…LRFAHRAKDI (343 aa). 197–204 serves as a coordination point for ATP; the sequence is GQTGSGKT. Coiled-coil stretches lie at residues 772 to 810 and 999 to 1043; these read VLSAKIELERIQEELERYRNFKDEKEVLLEEIQHLKNQL and ELLV…DQEV. The segment covering 1055–1065 has biased composition (polar residues); that stretch reads LPSNVVQSPEP. The disordered stretch occupies residues 1055-1081; it reads LPSNVVQSPEPSETGPARYDTGGSFGD.

Belongs to the TRAFAC class myosin-kinesin ATPase superfamily. Kinesin family. KIN-12 subfamily.

This Oryza sativa subsp. japonica (Rice) protein is Kinesin-like protein KIN-12B.